Here is a 337-residue protein sequence, read N- to C-terminus: Biotin synthase (337 aa).

A Radical SAM core domain is found at 39–267 (QEVQVCTLLS…KAMVRLSAGR (229 aa)). Residues cysteine 54, cysteine 58, and cysteine 61 each coordinate [4Fe-4S] cluster. The [2Fe-2S] cluster site is built by cysteine 98, cysteine 130, cysteine 190, and arginine 262.

It belongs to the radical SAM superfamily. Biotin synthase family. In terms of assembly, homodimer. [4Fe-4S] cluster serves as cofactor. The cofactor is [2Fe-2S] cluster.

The enzyme catalyses (4R,5S)-dethiobiotin + (sulfur carrier)-SH + 2 reduced [2Fe-2S]-[ferredoxin] + 2 S-adenosyl-L-methionine = (sulfur carrier)-H + biotin + 2 5'-deoxyadenosine + 2 L-methionine + 2 oxidized [2Fe-2S]-[ferredoxin]. Its pathway is cofactor biosynthesis; biotin biosynthesis; biotin from 7,8-diaminononanoate: step 2/2. Catalyzes the conversion of dethiobiotin (DTB) to biotin by the insertion of a sulfur atom into dethiobiotin via a radical-based mechanism. The sequence is that of Biotin synthase from Cytophaga hutchinsonii (strain ATCC 33406 / DSM 1761 / CIP 103989 / NBRC 15051 / NCIMB 9469 / D465).